The chain runs to 164 residues: MARRGRVQLRRIEDKASRQVRFSKRRAGLFKKAFELALLCDVEVALLVFSPVGKLYEYSSSSIEGTYDRYQQFAGARRDLNEGSTSINSDENASIHSRLRDITAWSLQNNADESDANQLEKLEKLLTNALRDTKSKKMLAKQNGEGSRSRANSSGSRGQEEGSA.

An MADS-box domain is found at 2–62 (ARRGRVQLRR…GKLYEYSSSS (61 aa)). The segment at 133 to 164 (TKSKKMLAKQNGEGSRSRANSSGSRGQEEGSA) is disordered.

As to expression, widely expressed.

The protein localises to the nucleus. Probable transcription factor involved in the regulation of flowering time under short day (SD) conditions. Functions as a promoter of flowering under SD conditions, upstream of EHD1, HD3A and MADS14, but downstream of GIGANTEA (GI). May transmit a SD promotion signal from GI to EHD1. Functions independently of MADS50 to control flowering time. The polypeptide is MADS-box transcription factor 51 (Oryza sativa subsp. japonica (Rice)).